The primary structure comprises 40 residues: Dolichyl-diphosphooligosaccharide--protein glycosyltransferase subunit 4 (40 aa).

The Lumenal segment spans residues 1–4 (MITD). A helical membrane pass occupies residues 5–25 (VQLAIFSNVLGVFLFLLVVAY). Residues 26 to 40 (HYINANTGKSSIKNK) lie on the Cytoplasmic side of the membrane.

This sequence belongs to the OST4 family. In terms of assembly, component of the oligosaccharyltransferase (OST) complex.

The protein localises to the endoplasmic reticulum membrane. Functionally, subunit of the oligosaccharyl transferase (OST) complex that catalyzes the initial transfer of a defined glycan (Glc(3)Man(9)GlcNAc(2) in eukaryotes) from the lipid carrier dolichol-pyrophosphate to an asparagine residue within an Asn-X-Ser/Thr consensus motif in nascent polypeptide chains, the first step in protein N-glycosylation. N-glycosylation occurs cotranslationally and the complex associates with the Sec61 complex at the channel-forming translocon complex that mediates protein translocation across the endoplasmic reticulum (ER). All subunits are required for a maximal enzyme activity. In Drosophila mojavensis (Fruit fly), this protein is Dolichyl-diphosphooligosaccharide--protein glycosyltransferase subunit 4.